The following is a 435-amino-acid chain: MRRSSSVQRVALLSVHTSPLAQPGTGDAGGMNVYVVELATQLARRGVEVEVFTRRTSSEQPPVVETADGVRVRHVAAGPYEGLAKDDLPGQLCAFTAGMLHAEARHAERHYDLVHSHYWLSGQVGWLTADRWDVPLVHSMHTMAKVKNAALAEGDAPEPAGRVIGEQQVVEAADRLVANTDAERRELIDLYGADPAKVVVVPPGVDLATFAPAPGRAASRARLGVPADAEVLLFVGRIQPLKAPDLLVRATAELLREQPWRRSRLRVVVLGGPSGSGTAHPDSLADLVRSLDLEDVVRMAPPVARAELADHYRAADVVAVPSHNESFGLVALEAQACATPVVAAAVGGLRTAVLDDGAGAGTGEGTGLLVPDHTPRSWAAALRTLLDDPARRTAMGARAARRAQGFGWGATAEATLEVYRRAVQDRAAERGADPR.

His16 provides a ligand contact to 1D-myo-inositol 3-phosphate. Residues 22–23 (QP) and Gly30 each bind UDP-N-acetyl-alpha-D-glucosamine. Residues 27-32 (DAGGMN), Lys85, Tyr118, Thr142, and Arg162 contribute to the 1D-myo-inositol 3-phosphate site. 3 residues coordinate UDP-N-acetyl-alpha-D-glucosamine: Arg237, Lys242, and Val303. 3 residues coordinate Mg(2+): Tyr312, Arg313, and Ala315. Residues Glu325 and Glu333 each contribute to the UDP-N-acetyl-alpha-D-glucosamine site. A Mg(2+)-binding site is contributed by Thr339.

It belongs to the glycosyltransferase group 1 family. MshA subfamily. As to quaternary structure, homodimer.

The catalysed reaction is 1D-myo-inositol 3-phosphate + UDP-N-acetyl-alpha-D-glucosamine = 1D-myo-inositol 2-acetamido-2-deoxy-alpha-D-glucopyranoside 3-phosphate + UDP + H(+). Functionally, catalyzes the transfer of a N-acetyl-glucosamine moiety to 1D-myo-inositol 3-phosphate to produce 1D-myo-inositol 2-acetamido-2-deoxy-glucopyranoside 3-phosphate in the mycothiol biosynthesis pathway. The polypeptide is D-inositol 3-phosphate glycosyltransferase (Kineococcus radiotolerans (strain ATCC BAA-149 / DSM 14245 / SRS30216)).